The chain runs to 587 residues: Chaperonin GroEL 1 (587 aa).

Residues 29–32 (TIGP), 86–90 (DGTTT), Gly-413, and Asp-492 each bind ATP.

It belongs to the chaperonin (HSP60) family. Forms a cylinder of 14 subunits composed of two heptameric rings stacked back-to-back. Interacts with the co-chaperonin GroES.

The protein localises to the cytoplasm. It carries out the reaction ATP + H2O + a folded polypeptide = ADP + phosphate + an unfolded polypeptide.. Together with its co-chaperonin GroES, plays an essential role in assisting protein folding. The GroEL-GroES system forms a nano-cage that allows encapsulation of the non-native substrate proteins and provides a physical environment optimized to promote and accelerate protein folding. In Prochlorococcus marinus (strain MIT 9515), this protein is Chaperonin GroEL 1.